We begin with the raw amino-acid sequence, 321 residues long: Serine/threonine-protein phosphatase PP1 (321 aa).

Mn(2+) contacts are provided by aspartate 60, histidine 62, aspartate 88, and asparagine 120. Residue histidine 121 is the Proton donor of the active site. Residues histidine 169 and histidine 244 each contribute to the Mn(2+) site. The tract at residues lysine 298–lysine 321 is disordered.

The protein belongs to the PPP phosphatase family. Interacts with dpiA. Mn(2+) serves as cofactor.

The catalysed reaction is O-phospho-L-seryl-[protein] + H2O = L-seryl-[protein] + phosphate. The enzyme catalyses O-phospho-L-threonyl-[protein] + H2O = L-threonyl-[protein] + phosphate. Inhibited by okadaic acid, tautomycin and calyculin A. Inhibited by phosphatase inhibitor 2 (dpiA). Its function is as follows. Protein phosphatase activity in vitro. This chain is Serine/threonine-protein phosphatase PP1 (pppB), found in Dictyostelium discoideum (Social amoeba).